A 219-amino-acid polypeptide reads, in one-letter code: Maleylacetoacetate isomerase (219 aa).

One can recognise a GST N-terminal domain in the interval 4-87 (NKTVLYSYWR…YLEETHPENP (84 aa)). Glutathione is bound by residues 14 to 19 (SSCSWR), Gln45, 71 to 72 (QS), Gln111, and 115 to 117 (NLK). The 126-residue stretch at 92-217 (GSYERAIARQ…LPQNQPDAEP (126 aa)) folds into the GST C-terminal domain.

Belongs to the GST superfamily. Zeta family. Glutathione serves as cofactor.

It catalyses the reaction 4-maleylacetoacetate = 4-fumarylacetoacetate. It functions in the pathway amino-acid degradation; L-phenylalanine degradation; acetoacetate and fumarate from L-phenylalanine: step 5/6. This is Maleylacetoacetate isomerase (mai) from Dictyostelium discoideum (Social amoeba).